The primary structure comprises 146 residues: Large ribosomal subunit protein uL11 (146 aa).

It belongs to the universal ribosomal protein uL11 family. In terms of assembly, part of the ribosomal stalk of the 50S ribosomal subunit. Interacts with L10 and the large rRNA to form the base of the stalk. L10 forms an elongated spine to which L12 dimers bind in a sequential fashion forming a multimeric L10(L12)X complex. One or more lysine residues are methylated.

Forms part of the ribosomal stalk which helps the ribosome interact with GTP-bound translation factors. The chain is Large ribosomal subunit protein uL11 from Treponema pallidum subsp. pallidum (strain SS14).